A 101-amino-acid polypeptide reads, in one-letter code: uncharacterized protein (101 aa).

The first 25 residues, Met-1 to Ala-25, serve as a signal peptide directing secretion. Residue Cys-26 is the site of N-palmitoyl cysteine attachment. Residue Cys-26 is the site of S-diacylglycerol cysteine attachment.

This sequence belongs to the MG439/MG440 family.

The protein resides in the cell membrane. This is an uncharacterized protein from Mycoplasma pneumoniae (strain ATCC 29342 / M129 / Subtype 1) (Mycoplasmoides pneumoniae).